Reading from the N-terminus, the 315-residue chain is Fructose-1,6-bisphosphatase class 1 (315 aa).

Positions 90, 111, 113, and 114 each coordinate Mg(2+). Substrate-binding positions include 114 to 117 (DGSS), Tyr-222, and Lys-253. Glu-259 contacts Mg(2+).

Belongs to the FBPase class 1 family. Homotetramer. Mg(2+) serves as cofactor.

It localises to the cytoplasm. It catalyses the reaction beta-D-fructose 1,6-bisphosphate + H2O = beta-D-fructose 6-phosphate + phosphate. Its pathway is carbohydrate biosynthesis; gluconeogenesis. The protein is Fructose-1,6-bisphosphatase class 1 of Trichlorobacter lovleyi (strain ATCC BAA-1151 / DSM 17278 / SZ) (Geobacter lovleyi).